Consider the following 268-residue polypeptide: Ribosomal RNA small subunit methyltransferase A (268 aa).

S-adenosyl-L-methionine is bound by residues N18, L20, G45, E66, D91, and N112.

Belongs to the class I-like SAM-binding methyltransferase superfamily. rRNA adenine N(6)-methyltransferase family. RsmA subfamily.

The protein resides in the cytoplasm. It carries out the reaction adenosine(1518)/adenosine(1519) in 16S rRNA + 4 S-adenosyl-L-methionine = N(6)-dimethyladenosine(1518)/N(6)-dimethyladenosine(1519) in 16S rRNA + 4 S-adenosyl-L-homocysteine + 4 H(+). Specifically dimethylates two adjacent adenosines (A1518 and A1519) in the loop of a conserved hairpin near the 3'-end of 16S rRNA in the 30S particle. May play a critical role in biogenesis of 30S subunits. In Shewanella sp. (strain MR-7), this protein is Ribosomal RNA small subunit methyltransferase A.